We begin with the raw amino-acid sequence, 52 residues long: Creatine kinase B-type (52 aa).

The Phosphagen kinase C-terminal domain maps to 1–52 (AKVLTLDLYKKLRDKSTPSGFTLDDIIQNEHLGYVLTCPSNLGTXLRAXVHV). Residues 1-52 (AKVLTLDLYKKLRDKSTPSGFTLDDIIQNEHLGYVLTCPSNLGTXLRAXVHV) form the Phosphagen kinase N-terminal domain. ATP-binding residues include Arg-13 and Arg-47.

It belongs to the ATP:guanido phosphotransferase family. Dimer of identical or non-identical chains, which can be either B (brain type) or M (muscle type). With MM being the major form in skeletal muscle and myocardium, MB existing in myocardium, and BB existing in many tissues, especially brain. As to expression, expressed in rectal gland, brain, skeletal muscle (at protein level).

The protein resides in the cytoplasm. Its subcellular location is the cytosol. It localises to the mitochondrion. The protein localises to the basal cell membrane. It catalyses the reaction creatine + ATP = N-phosphocreatine + ADP + H(+). Reversibly catalyzes the transfer of phosphate between ATP and various phosphogens (e.g. creatine phosphate). Creatine kinase isoenzymes play a central role in energy transduction in tissues with large, fluctuating energy demands, such as skeletal muscle, heart, brain and spermatozoa. In Squalus acanthias (Spiny dogfish), this protein is Creatine kinase B-type.